Here is a 491-residue protein sequence, read N- to C-terminus: Probable folate-biopterin transporter 4 (491 aa).

Helical transmembrane passes span 14–34 (VAFLWLVCLIYFTQGFRSFVW), 52–72 (SQFVFSVAFFPWSIKPLYGII), 84–104 (TPYLVISTVLSLVPWLVLGLD), 112–132 (LYLMIFLTVQNLGSAMADVVI), 154–174 (VSWFAMAVGGVCGSLLGGYAL), and 179–199 (IETIFLLFTVLPALQLLSCAL). Residues 222 to 262 (KSLTSNDNYPDTSKSNTRRRKGQKKGKKGDSNGKSETQKKQ) are disordered. Positions 224–236 (LTSNDNYPDTSKS) are enriched in polar residues. Basic residues predominate over residues 237–248 (NTRRRKGQKKGK). The span at 249–260 (KGDSNGKSETQK) shows a compositional bias: basic and acidic residues. The next 6 membrane-spanning stretches (helical) occupy residues 294–314 (MAWFFIAHITVPNLSTVMFYY), 323–343 (AAFLGTARVVGWLGLMFGTFI), 356–376 (SLLFAHIGLSVTILLDMVLVS), 389–411 (MVLFGSALGDAINQLKFMPFLIL), 437–457 (TVGSFMGAGLASLLGISSGSF), and 461–481 (FMGLAIQVFCTYIPVLFLFLI).

Belongs to the major facilitator superfamily. Folate-biopterin transporter (TC 2.A.71) family.

The protein resides in the membrane. In terms of biological role, could mediate folate transport. The protein is Probable folate-biopterin transporter 4 of Arabidopsis thaliana (Mouse-ear cress).